The primary structure comprises 490 residues: Auxin transporter-like protein 5 (490 aa).

Topologically, residues 1-55 (MEMANDKVAETVIVGNYVEMESEGKPPQDIKSKLSNFLWHGGSAYDAWFSCASNQ) are cytoplasmic. The helical transmembrane segment at 56–73 (VAQVLLTLPYSFSQLGML) threads the bilayer. Topologically, residues 74–75 (SG) are extracellular. A helical transmembrane segment spans residues 76–96 (ILFQLFYGILGSWTAYLISIL). Topologically, residues 97–132 (YVEYRTRKEREKVNFRSHVIQWFEVLDGLLGKHWRN) are cytoplasmic. Residues 133-153 (VGLGFNCTFLLFGSVIQLIAC) form a helical membrane-spanning segment. Residues 154 to 168 (ASNIYYINDNLDKRT) are Extracellular-facing. Residues 169–189 (WTYIFGACCATTVFIPSFHNY) form a helical membrane-spanning segment. Arg190 is a topological domain (cytoplasmic). Residues 191 to 211 (IWSFLGLVMTTYTAWYLTIAA) traverse the membrane as a helical segment. At 212-227 (VLHGQVEGVKHSGPNK) the chain is on the extracellular side. A helical membrane pass occupies residues 228-248 (IILYFTGATNILYTFGGHAVT). At 249–262 (VEIMHAMWKPQKFK) the chain is on the cytoplasmic side. Residues 263 to 283 (AIYLLATLYVLTLTIPSATAV) traverse the membrane as a helical segment. At 284–310 (YWAFGDMLLNHSNAFALLPKSPFRDMA) the chain is on the extracellular side. Asn293 is a glycosylation site (N-linked (GlcNAc...) asparagine). The chain crosses the membrane as a helical span at residues 311–331 (VILMLIHQFITFGFACTPLYF). The Cytoplasmic portion of the chain corresponds to 332–352 (VWEKTVGMHECKSLCKRALVR). Residues 353 to 373 (LPVVIPIWFLAIIFPFFGPIN) form a helical membrane-spanning segment. At 374–376 (STV) the chain is on the extracellular side. The helical transmembrane segment at 377 to 397 (GSLLVSFTVYIIPALAHIFTF) threads the bilayer. Residues 398 to 420 (KSSSARQNAVEQPPKFVGRWVGT) are Cytoplasmic-facing. A helical transmembrane segment spans residues 421-441 (FVINVFIVVWVLIVGFGFGGW). Over 442–490 (ASMVNFVHQIDTFGLFTKCYQCPPPTPSVPTMPPHQMNATAPSPHHHHH) the chain is Extracellular. N-linked (GlcNAc...) asparagine glycosylation occurs at Asn479.

Belongs to the amino acid/polyamine transporter 2 family. Amino acid/auxin permease (AAAP) (TC 2.A.18.1) subfamily. Shoots and roots of nodulating plants, at low levels.

It is found in the cell membrane. In terms of biological role, carrier protein involved in proton-driven auxin influx. Mediates the formation of auxin gradient from developing leaves (site of auxin biosynthesis) to tips by contributing to the loading of auxin in vascular tissues and facilitating acropetal (base to tip) auxin transport within inner tissues of the root apex, and basipetal (tip to base) auxin transport within outer tissues of the root apex. May be involved in lateral roots and nodules formation. The polypeptide is Auxin transporter-like protein 5 (LAX5) (Medicago truncatula (Barrel medic)).